The chain runs to 407 residues: Na(+)-translocating NADH-quinone reductase subunit F (407 aa).

The helical transmembrane segment at 3–23 (IILGVVMFTLIVLALVLVILF) threads the bilayer. The 2Fe-2S ferredoxin-type domain maps to 32 to 126 (GDITISINGD…DMDIELPEEI (95 aa)). [2Fe-2S] cluster contacts are provided by Cys69, Cys75, Cys78, and Cys110. The 141-residue stretch at 129-269 (VKKWECTVIS…SGPFGEFFAK (141 aa)) folds into the FAD-binding FR-type domain. The catalytic stretch occupies residues 272 to 389 (DAEMVFIGGG…PMMNAAVIGM (118 aa)).

This sequence belongs to the NqrF family. In terms of assembly, composed of six subunits; NqrA, NqrB, NqrC, NqrD, NqrE and NqrF. [2Fe-2S] cluster is required as a cofactor. Requires FAD as cofactor.

The protein localises to the cell inner membrane. It carries out the reaction a ubiquinone + n Na(+)(in) + NADH + H(+) = a ubiquinol + n Na(+)(out) + NAD(+). Functionally, NQR complex catalyzes the reduction of ubiquinone-1 to ubiquinol by two successive reactions, coupled with the transport of Na(+) ions from the cytoplasm to the periplasm. The first step is catalyzed by NqrF, which accepts electrons from NADH and reduces ubiquinone-1 to ubisemiquinone by a one-electron transfer pathway. This chain is Na(+)-translocating NADH-quinone reductase subunit F, found in Vibrio vulnificus (strain CMCP6).